The primary structure comprises 396 residues: Tyrosine--tRNA ligase (396 aa).

The 'HIGH' region motif lies at 42-51 (PTAPDIHLGH). The 'KMSKS' region motif lies at 226–230 (KMSKS). Residue K229 participates in ATP binding. The region spanning 334 to 395 (LPIANLLKEA…GKRKFAKIII (62 aa)) is the S4 RNA-binding domain.

Belongs to the class-I aminoacyl-tRNA synthetase family. TyrS type 2 subfamily. Homodimer.

It localises to the cytoplasm. The catalysed reaction is tRNA(Tyr) + L-tyrosine + ATP = L-tyrosyl-tRNA(Tyr) + AMP + diphosphate + H(+). Catalyzes the attachment of tyrosine to tRNA(Tyr) in a two-step reaction: tyrosine is first activated by ATP to form Tyr-AMP and then transferred to the acceptor end of tRNA(Tyr). The polypeptide is Tyrosine--tRNA ligase (Francisella tularensis subsp. tularensis (strain SCHU S4 / Schu 4)).